A 568-amino-acid polypeptide reads, in one-letter code: MMNKESFGACLLLTLPEDVFAVISRFLSPSDICNLILCGKSLPALVDTEKMWLVQCEEVKVLPLLEIVQWRIGISSYKALCRFLVEVVKPLLGIWVQQNPELGNVVYVMPGFLSVVGCRIIPQKVAPSWIQEDRVKWSPVFEIICGFDGSNGFFLHGRDKEGSCLYPGFVMGIEKSCNVLQLDVVPRQEKSSCNEIERGASREEGEIPFWMLAFSDRKNLLNIVTSHVSLHVVEPLNEMLFPTLKYDEAMLVERRTILLKMHKFGGNWKNMNLEEDDQLCYNPMQVKINEMLENLGDDYFFDEEELIEVTPTENTNVLGESSSSKNTTPSQSEIRVSNRQSFLSSGDTFGLGLTASYSEMSYYKGWPYMHFHHFLLYKLPVKKAVDQEAYAGLWGGTIGCPAGKCPKGKTEKSLYLLMLTYEESEEHSERVLIGTKILEGKRYVRHPNGTAMFVVKIDTPSLDPFPVDANETHFENSYSGEGIAEGYSFRYTGSKPGSLFVITNDLLAFVWKETKVVITLQRLNLTEILKKGLGSCVPPLPPSKNFTYMRRSFINEFTKLSTDSSYSE.

In terms of domain architecture, F-box spans alanine 9–glutamine 55. The segment at threonine 315 to serine 337 is disordered. Over residues serine 321 to serine 332 the composition is skewed to low complexity.

This chain is Putative F-box protein At5g39480, found in Arabidopsis thaliana (Mouse-ear cress).